The sequence spans 117 residues: uncharacterized protein (117 aa).

A helical transmembrane segment spans residues 57 to 77; the sequence is LGFPLGLLVFLHSLIVARFFV.

It is found in the membrane. This is an uncharacterized protein from Schizosaccharomyces pombe (strain 972 / ATCC 24843) (Fission yeast).